A 352-amino-acid chain; its full sequence is Desmethylxanthohumol 6'-O-methyltransferase (352 aa).

D219 serves as a coordination point for S-adenosyl-L-methionine. The Proton acceptor role is filled by H257.

The protein belongs to the class I-like SAM-binding methyltransferase superfamily. Cation-independent O-methyltransferase family. Homodimer. In terms of tissue distribution, highly expressed in lupulin glands. Detected in early-, mid- and late-stage cones.

The protein resides in the cytoplasm. It catalyses the reaction desmethylxanthohumol + S-adenosyl-L-methionine = xanthohumol + S-adenosyl-L-homocysteine + H(+). The catalysed reaction is xanthogalenol + S-adenosyl-L-methionine = 4'-O-methylxanthohumol + S-adenosyl-L-homocysteine + H(+). It functions in the pathway secondary metabolite biosynthesis. Inhibited by S-adenosyl homocysteine. In terms of biological role, involved in the biosynthesis of prenylated phenolics natural products which contribute to the bitter taste of beer and display broad biological activities. Catalyzes the biosynthesis of xanthohumol. Methylates desmethylxanthohumol and xanthogalenol, but not caffeic acid, prenylflavanones, simple phenols or phenylpropanoids. The chain is Desmethylxanthohumol 6'-O-methyltransferase from Humulus lupulus (European hop).